Here is a 407-residue protein sequence, read N- to C-terminus: Protein NIS1 (407 aa).

Residues 40 to 61 (TSNSNSNSNSNSNTNSNTNSNS) are compositionally biased toward low complexity. Disordered regions lie at residues 40–64 (TSNSNSNSNSNSNTNSNTNSNSDTK) and 251–315 (RSIR…KLNT). 2 positions are modified to phosphoserine: serine 260 and serine 264. A compositionally biased stretch (low complexity) spans 266-276 (PTTTPATATKT). The segment covering 277–302 (IKQNSTTPTTRSVYNKNVGRSNTSPS) has biased composition (polar residues). Residues serine 300 and serine 302 each carry the phosphoserine modification. Residues 306–315 (HPKRRGKLNT) are compositionally biased toward basic residues. The SUMO-binding motif lies at 391 to 398 (IIIPDSQD).

As to quaternary structure, interacts with CBF2, GIS1, NAP1, PRM8, REI1, SHS1 and SMT3.

It is found in the bud neck. The protein localises to the cytoplasm. It localises to the cell cortex. Functionally, may be involved in a mitotic signaling network. Binds sumoylated proteins and may stabilize SUMO chains. In Saccharomyces cerevisiae (strain YJM789) (Baker's yeast), this protein is Protein NIS1 (NIS1).